Consider the following 286-residue polypeptide: MHTQKAITEALQKLGVQSGDLLMVHASLKSIGPVEGGAETVVAALRSAVGPTGTVMGYASWDRSPYEETLNGARLDDNARRTWPPFDPATAGTYRGFGLLNQFLVQAPGARRSAHPDASMVAVGPLAETLTEPHELGHALGEGSPNERFVRLGGKALLLGAPLNSVTALHYAEAVADIPNKRWVTYEMPMPGRDGEVAWKTASDYDSNGILDCFAIEGKQDAVETIANAYVKLGRHREGVVGFAQCYLFDAQDIVTFGVTYLEKHFGTTPIVPAHEAIERSCEPSG.

The protein belongs to the antibiotic N-acetyltransferase family.

The catalysed reaction is a 2-deoxystreptamine antibiotic + acetyl-CoA = an N(3)-acetyl-2-deoxystreptamine antibiotic + CoA + H(+). Functionally, resistance to antibiotics containing the 2-deoxy-streptamine ring including gentamicin, kanamycin, tobramycin, neomycin and apramycin. This is Aminoglycoside N(3)-acetyltransferase III (aacC3) from Salmonella sp.